Consider the following 680-residue polypeptide: MRHIWALPSLTALSLFQASAASAVPRARQAINTSSPLAPFRTKRRFRTQAQLLSNSATKTTLVEEMVTVDTTSRLAALRSLMKERNLHVYVVPSEDSHASEYIADCDARRTFISGFSGSAGTAIVTLDKAALATDGRYFNQASKQLDSNWYLLKTGMQDVPTWQEWATQEAEGGKLIGVDPQLISSAIAEKLDEDIKNAGGGGLVGIKENLVDLVWGSEQPPRPSNSVFLLGQQYAGKDTAAKLADLRKELDKKKAAGFVLSMLDEIAWLFNLRGSDIAYNPVFFSYAIVTQASATLYIDEAKLTDECKTYLERNKVTIKPYGALFEDSEELARRAEADSKDAKPRKYLISSKGSWALKLALGGNKFVDEVRSPVGDAKAVKNDVELNGMRNCHIRDGAALTEFFAWLEDQLVNQKAQLDEVDAADKLEQIRSKHKDFVGLSFDTISSTGANAAVIHYKPEKGACKIIDPNAIYLCDSGAQYLDGTTDTTRTLHFGTPTAKEKKAYTLVLKGNIALDSVVFPKGTSGFAIDVMARQFLWKYGLDYRHGTGHGVGSFLNVHEGPIGIGTRKQYIDVALAAGNVLSIEPGYYEDEAFGIRIENLAIVKEVKTEHSFGDKPYLGFEHVTMVPYARNLIDETLLTPDEKDWLNRANKKILEKTLGYFENDPLTKAWLLRETQPF.

Mn(2+) contacts are provided by aspartate 477, aspartate 488, glutamate 586, and glutamate 600.

Belongs to the peptidase M24B family. Requires Mn(2+) as cofactor.

The enzyme catalyses Release of any N-terminal amino acid, including proline, that is linked to proline, even from a dipeptide or tripeptide.. Functionally, catalyzes the removal of a penultimate prolyl residue from the N-termini of peptides. This Podospora anserina (strain S / ATCC MYA-4624 / DSM 980 / FGSC 10383) (Pleurage anserina) protein is Probable Xaa-Pro aminopeptidase P (AMPP).